A 228-amino-acid chain; its full sequence is Orotate phosphoribosyltransferase (228 aa).

Residue K26 coordinates 5-phospho-alpha-D-ribose 1-diphosphate. Orotate is bound at residue 34 to 35 (FF). Residues 72 to 73 (YK), R98, K99, K102, H104, and 123 to 131 (DDVISAGTS) contribute to the 5-phospho-alpha-D-ribose 1-diphosphate site. Residues S127 and R155 each coordinate orotate.

This sequence belongs to the purine/pyrimidine phosphoribosyltransferase family. PyrE subfamily. As to quaternary structure, homodimer. It depends on Mg(2+) as a cofactor.

The enzyme catalyses orotidine 5'-phosphate + diphosphate = orotate + 5-phospho-alpha-D-ribose 1-diphosphate. The protein operates within pyrimidine metabolism; UMP biosynthesis via de novo pathway; UMP from orotate: step 1/2. In terms of biological role, catalyzes the transfer of a ribosyl phosphate group from 5-phosphoribose 1-diphosphate to orotate, leading to the formation of orotidine monophosphate (OMP). In Nitrosospira multiformis (strain ATCC 25196 / NCIMB 11849 / C 71), this protein is Orotate phosphoribosyltransferase.